The following is a 397-amino-acid chain: Calponin-like protein clik-2 (397 aa).

6 Calponin-like repeats span residues 29 to 54 (LSQQ…RWNI), 73 to 98 (LRVQ…RFQV), 119 to 144 (IPKQ…RNQV), 161 to 189 (LCFQ…RQAT), 209 to 234 (TPWY…RDVL), and 255 to 280 (VPLQ…RNTQ). The interval 301–397 (EETKPPGSAS…EEEEEEEEDE (97 aa)) is disordered. Over residues 321 to 332 (KFEERESSRQSE) the composition is skewed to basic and acidic residues. Acidic residues-rich tracts occupy residues 344 to 360 (VEPE…EEKI) and 367 to 397 (EEEE…EEDE).

This sequence belongs to the calponin family. As to expression, expressed in pharyngeal muscle cells (at protein level).

Its function is as follows. Required for pharyngeal pumping. The sequence is that of Calponin-like protein clik-2 from Caenorhabditis elegans.